The following is a 1538-amino-acid chain: CLIP-associating protein 1 (1538 aa).

2 HEAT repeats span residues 87–124 (AQIG…QAAN) and 163–200 (LTLS…HVGE). Positions 235–292 (SANDKNFDDEDSVDGNRPSSASSTSSKAPPSSRRNVGMGTTRRLGSSTLGSKSSAAKE) are disordered. Position 246 is a phosphoserine (S246). Residues 251–268 (RPSSASSTSSKAPPSSRR) are compositionally biased toward low complexity. HEAT repeat units lie at residues 405 to 440 (HGAE…IRHT) and 441 to 477 (HIPR…EWQT). The interval 543 to 783 (SDSIVSLPQS…DRFGLGQPGR (241 aa)) is disordered. S545, S548, S558, S559, and S568 each carry phosphoserine. Low complexity predominate over residues 548–567 (SLPQSDRSSSSSQESLNRPL). Positions 574–594 (TGSTTSRASTVSTKSVSTTGS) are enriched in low complexity. The residue at position 600 (S600) is a Phosphoserine. Over residues 606-628 (AAASAKSKVSSSSGTTPFSSAAA) the composition is skewed to low complexity. Residues S636, S646, S647, and S649 each carry the phosphoserine modification. The segment covering 645–658 (QSSGSATNVASTPD) has biased composition (polar residues). T656 carries the phosphothreonine modification. Residues 662 to 785 (RSRAKVVSQS…FGLGQPGRIP (124 aa)) are interaction with microtubules, MAPRE1 and MAPRE3. Low complexity predominate over residues 673–692 (RSRSANPAGAGSRSSSPGKL). A phosphoserine mark is found at S684, S688, S695, and S705. A compositionally biased stretch (gly residues) spans 693 to 705 (LGSGYGGLTGGSS). T711 bears the Phosphothreonine mark. Phosphoserine is present on S714. Polar residues predominate over residues 724–733 (QGCSRETSPN). Phosphoserine is present on residues S787, S797, and S823. One copy of the HEAT 5 repeat lies at 974-1011 (QQFNILMRFIVDQTQTPNLKVKVAILKYIESLARQMDP). 2 disordered regions span residues 1080–1120 (HLKN…CSHG) and 1136–1156 (AKHP…SHKA). The span at 1082-1097 (KNSSNTSVGSPSNTIG) shows a compositional bias: polar residues. S1091 carries the post-translational modification Phosphoserine. Phosphothreonine occurs at positions 1095 and 1099. Positions 1106-1115 (SRTSPLTSPT) are enriched in low complexity. Position 1113 is a phosphoserine (S1113). S1196 and S1223 each carry phosphoserine. Positions 1215–1238 (VSRDGGAASPATEGRGGSEVEGGR) are disordered. An interaction with CLIP2 region spans residues 1254–1538 (RAFPGPRARD…SSSSDVSTHS (285 aa)). Residues 1254-1538 (RAFPGPRARD…SSSSDVSTHS (285 aa)) form an interaction with PHLDB2 and RSN region. Positions 1256–1538 (FPGPRARDYN…SSSSDVSTHS (283 aa)) are localization to kinetochores. Positions 1299–1330 (DHSDLVADLLKELSNHNERVEERKGALLELLK) form a coiled coil. 2 HEAT repeats span residues 1342-1379 (EHFK…NQPA) and 1460-1497 (QLLV…VIGE).

Belongs to the CLASP family. Interacts with CLIP2, ERC1, MAPRE1, MAPRE3, microtubules, PHLDB2 and RSN. The interaction with ERC1 may be mediated by PHLDB2. Interacts with GCC2; recruits CLASP1 to Golgi membranes. Interacts with MACF1. Interacts with mtcl2 and MTCL1.

It is found in the cytoplasm. Its subcellular location is the cytoskeleton. The protein localises to the microtubule organizing center. It localises to the centrosome. The protein resides in the chromosome. It is found in the centromere. Its subcellular location is the kinetochore. The protein localises to the spindle. It localises to the golgi apparatus. The protein resides in the trans-Golgi network. In terms of biological role, microtubule plus-end tracking protein that promotes the stabilization of dynamic microtubules. Involved in the nucleation of noncentrosomal microtubules originating from the trans-Golgi network (TGN). Required for the polarization of the cytoplasmic microtubule arrays in migrating cells towards the leading edge of the cell. May act at the cell cortex to enhance the frequency of rescue of depolymerizing microtubules by attaching their plus-ends to cortical platforms composed of ERC1 and PHLDB2. This cortical microtubule stabilizing activity is regulated at least in part by phosphatidylinositol 3-kinase signaling. Also performs a similar stabilizing function at the kinetochore which is essential for the bipolar alignment of chromosomes on the mitotic spindle. This is CLIP-associating protein 1 (CLASP1) from Homo sapiens (Human).